We begin with the raw amino-acid sequence, 98 residues long: PsbF-like protein (98 aa).

The next 2 helical transmembrane spans lie at 5–25 and 73–93; these read VLLV…WLGK and TAAV…ILAM.

This sequence belongs to the PsbE/PsbF family.

The protein localises to the membrane. Its function is as follows. Unknown. Resembles PsbF, one of the subunits of the photosystem II reaction center. However, it encodes asparagine rather than histidine at the site PsbF uses to bind heme. The chain is PsbF-like protein from Prochlorococcus marinus (strain MIT 9312).